The chain runs to 360 residues: Phospho-N-acetylmuramoyl-pentapeptide-transferase (360 aa).

A run of 10 helical transmembrane segments spans residues 21–41, 73–93, 94–114, 132–152, 168–188, 199–219, 239–259, 263–283, 288–308, and 338–358; these read YLSF…LWMG, TMGG…WADL, TNPY…VGFV, WKYF…YAHG, VMPQ…VGTS, GLAI…AWAT, LVVV…FNTY, VFMG…IAVL, FVLV…ILQV, and VIVR…ATLK.

The protein belongs to the glycosyltransferase 4 family. MraY subfamily. The cofactor is Mg(2+).

It localises to the cell inner membrane. It carries out the reaction UDP-N-acetyl-alpha-D-muramoyl-L-alanyl-gamma-D-glutamyl-meso-2,6-diaminopimeloyl-D-alanyl-D-alanine + di-trans,octa-cis-undecaprenyl phosphate = di-trans,octa-cis-undecaprenyl diphospho-N-acetyl-alpha-D-muramoyl-L-alanyl-D-glutamyl-meso-2,6-diaminopimeloyl-D-alanyl-D-alanine + UMP. Its pathway is cell wall biogenesis; peptidoglycan biosynthesis. In terms of biological role, catalyzes the initial step of the lipid cycle reactions in the biosynthesis of the cell wall peptidoglycan: transfers peptidoglycan precursor phospho-MurNAc-pentapeptide from UDP-MurNAc-pentapeptide onto the lipid carrier undecaprenyl phosphate, yielding undecaprenyl-pyrophosphoryl-MurNAc-pentapeptide, known as lipid I. The polypeptide is Phospho-N-acetylmuramoyl-pentapeptide-transferase (Vibrio cholerae serotype O1 (strain M66-2)).